We begin with the raw amino-acid sequence, 85 residues long: Large ribosomal subunit protein bL31B (85 aa).

It belongs to the bacterial ribosomal protein bL31 family. Type B subfamily. Part of the 50S ribosomal subunit.

The protein is Large ribosomal subunit protein bL31B of Vibrio cholerae serotype O1 (strain ATCC 39541 / Classical Ogawa 395 / O395).